Consider the following 580-residue polypeptide: Glutamine--tRNA ligase (580 aa).

Residues 41–51 (PEPNGYLHIGH) carry the 'HIGH' region motif. ATP-binding positions include 42-44 (EPN) and 48-54 (HIGHAKA). 2 residues coordinate L-glutamine: aspartate 74 and tyrosine 218. ATP-binding positions include threonine 237, 285 to 286 (RL), and 293 to 295 (MSK). Positions 292–296 (VMSKR) match the 'KMSKS' region motif.

It belongs to the class-I aminoacyl-tRNA synthetase family. Monomer.

The protein resides in the cytoplasm. The catalysed reaction is tRNA(Gln) + L-glutamine + ATP = L-glutaminyl-tRNA(Gln) + AMP + diphosphate. In Xylella fastidiosa (strain Temecula1 / ATCC 700964), this protein is Glutamine--tRNA ligase.